A 128-amino-acid polypeptide reads, in one-letter code: UPF0325 protein KPN78578_01770 (128 aa).

This sequence belongs to the UPF0325 family.

The polypeptide is UPF0325 protein KPN78578_01770 (Klebsiella pneumoniae subsp. pneumoniae (strain ATCC 700721 / MGH 78578)).